Here is a 238-residue protein sequence, read N- to C-terminus: Pyridoxine 5'-phosphate synthase (238 aa).

Asn-6 serves as a coordination point for 3-amino-2-oxopropyl phosphate. Residue 8–9 (DH) participates in 1-deoxy-D-xylulose 5-phosphate binding. Arg-17 serves as a coordination point for 3-amino-2-oxopropyl phosphate. Residue His-42 is the Proton acceptor of the active site. Arg-44 and His-49 together coordinate 1-deoxy-D-xylulose 5-phosphate. Glu-69 functions as the Proton acceptor in the catalytic mechanism. 1-deoxy-D-xylulose 5-phosphate is bound at residue Thr-99. Catalysis depends on His-190, which acts as the Proton donor. 3-amino-2-oxopropyl phosphate-binding positions include Gly-191 and 212-213 (GH).

The protein belongs to the PNP synthase family. Homooctamer; tetramer of dimers.

Its subcellular location is the cytoplasm. It catalyses the reaction 3-amino-2-oxopropyl phosphate + 1-deoxy-D-xylulose 5-phosphate = pyridoxine 5'-phosphate + phosphate + 2 H2O + H(+). The protein operates within cofactor biosynthesis; pyridoxine 5'-phosphate biosynthesis; pyridoxine 5'-phosphate from D-erythrose 4-phosphate: step 5/5. Functionally, catalyzes the complicated ring closure reaction between the two acyclic compounds 1-deoxy-D-xylulose-5-phosphate (DXP) and 3-amino-2-oxopropyl phosphate (1-amino-acetone-3-phosphate or AAP) to form pyridoxine 5'-phosphate (PNP) and inorganic phosphate. The chain is Pyridoxine 5'-phosphate synthase from Chlorobium phaeobacteroides (strain BS1).